Reading from the N-terminus, the 741-residue chain is Protein O-mannosyl-transferase TMTC4 (741 aa).

Residues 1-14 lie on the Cytoplasmic side of the membrane; the sequence is MAVLDTDLDHILPS. The helical transmembrane segment at 15 to 35 threads the bilayer; that stretch reads SVLPPFWAKLVVGSVAIVCFA. The Extracellular segment spans residues 36 to 111; the sequence is RSYDGDFVFD…FHPVGFHVVN (76 aa). Asn-78 carries an N-linked (GlcNAc...) asparagine glycan. The helical transmembrane segment at 112-132 threads the bilayer; the sequence is ILLHSGISVLMVDVFSVLFGG. The Cytoplasmic portion of the chain corresponds to 133-141; sequence LQYTSKGRR. The chain crosses the membrane as a helical span at residues 142–162; it reads LHLAPRASLLAALLFAVHPVH. At 163 to 165 the chain is on the extracellular side; that stretch reads TEC. A helical membrane pass occupies residues 166 to 186; the sequence is VAGVVGRADLLCALFFLLSFL. Residues 187 to 198 lie on the Cytoplasmic side of the membrane; that stretch reads GYCKAFRESNKE. The chain crosses the membrane as a helical span at residues 199-219; sequence GAHSSTFWVLLSIFLGAVAML. Residues 220 to 224 are Extracellular-facing; that stretch reads CKEQG. The helical transmembrane segment at 225-245 threads the bilayer; it reads ITVLGLNAVFDILVIGKFNVL. The Cytoplasmic portion of the chain corresponds to 246 to 268; sequence EIVQKVLHKDKSLENLGMLRNGG. The chain crosses the membrane as a helical span at residues 269 to 288; it reads LLFRMTLLTSGGAGMLYVRW. Residues 289–354 are Extracellular-facing; sequence RIMGTGPPAF…PLIKSISDWR (66 aa). Residues 355–375 form a helical membrane-spanning segment; the sequence is VIALAALWFCLIGLICQALCS. The Cytoplasmic segment spans residues 376 to 382; it reads EDGHKRR. The chain crosses the membrane as a helical span at residues 383–403; it reads ILTLGLGFLVIPFLPASNLFF. The Extracellular segment spans residues 404–412; sequence RVGFVVAER. A helical membrane pass occupies residues 413-433; sequence VLYLPSVGYCVLLTFGFGALS. The Cytoplasmic segment spans residues 434 to 440; it reads KHTKKKK. A helical membrane pass occupies residues 441 to 461; sequence LIAAVVLGILFINTLRCVLRS. Residues 462-741 are Extracellular-facing; sequence GEWRSEEQLF…KLELMQKKAV (280 aa). TPR repeat units lie at residues 482 to 515, 516 to 549, 550 to 583, 584 to 617, 618 to 651, 652 to 685, and 686 to 719; these read AKVH…NPKY, VHAM…QPDF, AAAW…RRKY, PDCY…KPEH, SLAW…IPND, HSLM…NPNA, and ASYH…DPTA. Asn-497 is a glycosylation site (N-linked (GlcNAc...) asparagine). N-linked (GlcNAc...) asparagine glycosylation is present at Asn-609.

It belongs to the TMTC family.

It is found in the membrane. The protein resides in the endoplasmic reticulum. It carries out the reaction a di-trans,poly-cis-dolichyl beta-D-mannosyl phosphate + L-seryl-[protein] = 3-O-(alpha-D-mannosyl)-L-seryl-[protein] + a di-trans,poly-cis-dolichyl phosphate + H(+). The catalysed reaction is a di-trans,poly-cis-dolichyl beta-D-mannosyl phosphate + L-threonyl-[protein] = 3-O-(alpha-D-mannosyl)-L-threonyl-[protein] + a di-trans,poly-cis-dolichyl phosphate + H(+). It functions in the pathway protein modification; protein glycosylation. Transfers mannosyl residues to the hydroxyl group of serine or threonine residues. The 4 members of the TMTC family are O-mannosyl-transferases dedicated primarily to the cadherin superfamily, each member seems to have a distinct role in decorating the cadherin domains with O-linked mannose glycans at specific regions. Also acts as O-mannosyl-transferase on other proteins such as PDIA3. The polypeptide is Protein O-mannosyl-transferase TMTC4 (Homo sapiens (Human)).